The following is a 933-amino-acid chain: Isoleucine--tRNA ligase (933 aa).

The 'HIGH' region motif lies at 57-67 (PYANGNIHMGH). Position 556 (Glu556) interacts with L-isoleucyl-5'-AMP. Positions 597-601 (KMSKS) match the 'KMSKS' region motif. Residue Lys600 coordinates ATP. 4 residues coordinate Zn(2+): Cys891, Cys894, Cys911, and Cys914.

It belongs to the class-I aminoacyl-tRNA synthetase family. IleS type 1 subfamily. Monomer. It depends on Zn(2+) as a cofactor.

It is found in the cytoplasm. It carries out the reaction tRNA(Ile) + L-isoleucine + ATP = L-isoleucyl-tRNA(Ile) + AMP + diphosphate. In terms of biological role, catalyzes the attachment of isoleucine to tRNA(Ile). As IleRS can inadvertently accommodate and process structurally similar amino acids such as valine, to avoid such errors it has two additional distinct tRNA(Ile)-dependent editing activities. One activity is designated as 'pretransfer' editing and involves the hydrolysis of activated Val-AMP. The other activity is designated 'posttransfer' editing and involves deacylation of mischarged Val-tRNA(Ile). This chain is Isoleucine--tRNA ligase, found in Pediococcus pentosaceus (strain ATCC 25745 / CCUG 21536 / LMG 10740 / 183-1w).